The chain runs to 180 residues: Inner membrane-spanning protein YciB (180 aa).

The next 5 helical transmembrane spans lie at 25–45, 49–69, 76–96, 118–138, and 150–170; these read QNAT…CYII, VSKL…ITLI, IKIK…MSGI, IILS…NEVV, and FKVF…LPLL.

Belongs to the YciB family.

The protein localises to the cell inner membrane. Plays a role in cell envelope biogenesis, maintenance of cell envelope integrity and membrane homeostasis. This Rickettsia prowazekii (strain Madrid E) protein is Inner membrane-spanning protein YciB.